The chain runs to 116 residues: MTEQTDAAMPIKFTDAAAIKVKGLLEEEQNPELKLRVYVTGGGCSGFQYGFTFDEKSSADDFVIEKQGVKLVVDPMSLQYLVGGEVDYTSGLEGSRFFVKNPNASSTCGCGASFSV.

Positions 44, 108, and 110 each coordinate iron-sulfur cluster.

It belongs to the HesB/IscA family. As to quaternary structure, homodimer. Requires iron-sulfur cluster as cofactor.

Required for insertion of 4Fe-4S clusters for at least IspG. This Shewanella denitrificans (strain OS217 / ATCC BAA-1090 / DSM 15013) protein is Iron-sulfur cluster insertion protein ErpA.